A 118-amino-acid chain; its full sequence is Large ribosomal subunit protein bL19 (118 aa).

This sequence belongs to the bacterial ribosomal protein bL19 family.

Functionally, this protein is located at the 30S-50S ribosomal subunit interface and may play a role in the structure and function of the aminoacyl-tRNA binding site. The sequence is that of Large ribosomal subunit protein bL19 from Campylobacter jejuni subsp. doylei (strain ATCC BAA-1458 / RM4099 / 269.97).